Here is a 522-residue protein sequence, read N- to C-terminus: Peptide chain release factor 3 (522 aa).

In terms of domain architecture, tr-type G spans 10–277 (ASRKTFAIIS…TFVDFAPSPS (268 aa)). Residues 19-26 (SHPDAGKT), 87-91 (DTPGH), and 141-144 (NKMD) each bind GTP.

Belongs to the TRAFAC class translation factor GTPase superfamily. Classic translation factor GTPase family. PrfC subfamily.

Its subcellular location is the cytoplasm. Its function is as follows. Increases the formation of ribosomal termination complexes and stimulates activities of RF-1 and RF-2. It binds guanine nucleotides and has strong preference for UGA stop codons. It may interact directly with the ribosome. The stimulation of RF-1 and RF-2 is significantly reduced by GTP and GDP, but not by GMP. In Listeria monocytogenes serotype 4b (strain CLIP80459), this protein is Peptide chain release factor 3.